The sequence spans 265 residues: Homeobox protein Nkx-6.3 (265 aa).

The segment at residues 139-198 is a DNA-binding region (homeobox); the sequence is KKHTRPTFTGHQIFALEKTFEQTKYLAGPERARLAYSLGMTESQVKVWFQNRRTKWRKKS. The segment at 196 to 240 is disordered; sequence KKSALEPSSSTPRAPGGAGAGAGGDRAPSENEDDEYNKPLDPDSD.

The protein localises to the nucleus. Functionally, putative transcription factor, which may be involved in patterning of central nervous system and pancreas. The polypeptide is Homeobox protein Nkx-6.3 (NKX6-3) (Homo sapiens (Human)).